Here is a 352-residue protein sequence, read N- to C-terminus: UDP-3-O-acylglucosamine N-acyltransferase (352 aa).

His246 (proton acceptor) is an active-site residue.

Belongs to the transferase hexapeptide repeat family. LpxD subfamily. In terms of assembly, homotrimer.

It catalyses the reaction a UDP-3-O-[(3R)-3-hydroxyacyl]-alpha-D-glucosamine + a (3R)-hydroxyacyl-[ACP] = a UDP-2-N,3-O-bis[(3R)-3-hydroxyacyl]-alpha-D-glucosamine + holo-[ACP] + H(+). It functions in the pathway bacterial outer membrane biogenesis; LPS lipid A biosynthesis. Catalyzes the N-acylation of UDP-3-O-acylglucosamine using 3-hydroxyacyl-ACP as the acyl donor. Is involved in the biosynthesis of lipid A, a phosphorylated glycolipid that anchors the lipopolysaccharide to the outer membrane of the cell. This Chlorobium luteolum (strain DSM 273 / BCRC 81028 / 2530) (Pelodictyon luteolum) protein is UDP-3-O-acylglucosamine N-acyltransferase.